The sequence spans 528 residues: UDP-glucuronosyltransferase 2A1 (528 aa).

The signal sequence occupies residues 1–21 (MLKNILLCSLQISLLGMSLGG). The Extracellular segment spans residues 22–494 (NVLIWPMEGS…FQYHSLDVIG (473 aa)). A glycan (N-linked (GlcNAc...) asparagine) is linked at asparagine 49. Lysine 135 is modified (N6-succinyllysine). Residue asparagine 314 is glycosylated (N-linked (GlcNAc...) asparagine). A helical transmembrane segment spans residues 495-515 (FLLACVASAILLVAKCCLFIF). Topologically, residues 516 to 528 (QKVGKTGKKKKRD) are cytoplasmic.

This sequence belongs to the UDP-glycosyltransferase family.

Its subcellular location is the membrane. It catalyses the reaction glucuronate acceptor + UDP-alpha-D-glucuronate = acceptor beta-D-glucuronoside + UDP + H(+). The catalysed reaction is 16beta,17beta-estriol + UDP-alpha-D-glucuronate = 16beta,17beta-estriol 16-O-(beta-D-glucuronate) + UDP + H(+). The enzyme catalyses 16alpha,17alpha-estriol + UDP-alpha-D-glucuronate = 16alpha,17alpha-estriol 16-O-(beta-D-glucuronate) + UDP + H(+). It carries out the reaction 17alpha-estradiol + UDP-alpha-D-glucuronate = 17alpha-estradiol 17-O-(beta-D-glucuronate) + UDP + H(+). It catalyses the reaction 17alpha-estradiol + UDP-alpha-D-glucuronate = 17alpha-estradiol 3-O-(beta-D-glucuronate) + UDP + H(+). The catalysed reaction is 17beta-estradiol + UDP-alpha-D-glucuronate = 17beta-estradiol 3-O-(beta-D-glucuronate) + UDP + H(+). The enzyme catalyses 17beta-estradiol + UDP-alpha-D-glucuronate = 17beta-estradiol 17-O-(beta-D-glucuronate) + UDP + H(+). It carries out the reaction testosterone + UDP-alpha-D-glucuronate = testosterone 17-O-(beta-D-glucuronate) + UDP + H(+). It catalyses the reaction epitestosterone + UDP-alpha-D-glucuronate = epitestosterone 17-O-(beta-D-glucuronate) + UDP + H(+). The catalysed reaction is lithocholate + UDP-alpha-D-glucuronate = lithocholoyl-3-O-(beta-D-glucuronate) + UDP + H(+). The enzyme catalyses lithocholate + UDP-alpha-D-glucuronate = lithocholoyl-24-O-(beta-D-glucuronate) + UDP. It carries out the reaction deoxycholate + UDP-alpha-D-glucuronate = deoxycholoyl-24-O-(beta-D-glucuronate) + UDP. It catalyses the reaction hyodeoxycholate + UDP-alpha-D-glucuronate = hyodeoxycholate 6-O-(beta-D-glucuronate) + UDP + H(+). The catalysed reaction is hyocholate + UDP-alpha-D-glucuronate = hyocholoyl-24-O-(beta-D-glucuronate) + UDP. Its function is as follows. UDP-glucuronosyltransferase (UGT) that catalyzes phase II biotransformation reactions in which lipophilic substrates are conjugated with glucuronic acid to increase the metabolite's water solubility, thereby facilitating excretion into either the urine or bile. Essential for the elimination and detoxification of drugs, xenobiotics and endogenous compounds. Catalyzes the glucuronidation of endogenous steroid hormones such as androgens (testosterones) and estrogens (estradiol and estriol). Contributes to bile acid (BA) detoxification by catalyzing the glucuronidation of BA substrates, which are natural detergents for dietary lipids absorption. Shows a high affinity to aliphatic odorants such as citronellol as well as olfactory tissue specificity, and therefore may be involved in olfaction. The polypeptide is UDP-glucuronosyltransferase 2A1 (Mus musculus (Mouse)).